A 426-amino-acid polypeptide reads, in one-letter code: Serine--tRNA ligase (426 aa).

Residue 233–235 participates in L-serine binding; the sequence is TSE. 264-266 contacts ATP; it reads RSE. Glutamate 287 contacts L-serine. 351–354 provides a ligand contact to ATP; it reads EISS. Serine 387 provides a ligand contact to L-serine.

The protein belongs to the class-II aminoacyl-tRNA synthetase family. Type-1 seryl-tRNA synthetase subfamily. In terms of assembly, homodimer. The tRNA molecule binds across the dimer.

The protein resides in the cytoplasm. It carries out the reaction tRNA(Ser) + L-serine + ATP = L-seryl-tRNA(Ser) + AMP + diphosphate + H(+). It catalyses the reaction tRNA(Sec) + L-serine + ATP = L-seryl-tRNA(Sec) + AMP + diphosphate + H(+). The protein operates within aminoacyl-tRNA biosynthesis; selenocysteinyl-tRNA(Sec) biosynthesis; L-seryl-tRNA(Sec) from L-serine and tRNA(Sec): step 1/1. Catalyzes the attachment of serine to tRNA(Ser). Is also able to aminoacylate tRNA(Sec) with serine, to form the misacylated tRNA L-seryl-tRNA(Sec), which will be further converted into selenocysteinyl-tRNA(Sec). The chain is Serine--tRNA ligase from Xylella fastidiosa (strain M23).